We begin with the raw amino-acid sequence, 250 residues long: Coproheme decarboxylase (250 aa).

Fe-coproporphyrin III-binding positions include arginine 131, 145-149 (YPMNK), histidine 172, and glutamine 185. Tyrosine 145 is a catalytic residue.

Belongs to the ChdC family. Type 1 subfamily. Requires Fe-coproporphyrin III as cofactor.

The catalysed reaction is Fe-coproporphyrin III + 2 H2O2 + 2 H(+) = heme b + 2 CO2 + 4 H2O. It catalyses the reaction Fe-coproporphyrin III + H2O2 + H(+) = harderoheme III + CO2 + 2 H2O. The enzyme catalyses harderoheme III + H2O2 + H(+) = heme b + CO2 + 2 H2O. Its pathway is porphyrin-containing compound metabolism; protoheme biosynthesis. Functionally, involved in coproporphyrin-dependent heme b biosynthesis. Catalyzes the decarboxylation of Fe-coproporphyrin III (coproheme) to heme b (protoheme IX), the last step of the pathway. The reaction occurs in a stepwise manner with a three-propionate intermediate. This chain is Coproheme decarboxylase, found in Staphylococcus aureus (strain bovine RF122 / ET3-1).